Reading from the N-terminus, the 421-residue chain is D-amino acid dehydrogenase (421 aa).

3 to 17 (VLVLGGGVVGVTSAY) serves as a coordination point for FAD.

It belongs to the DadA oxidoreductase family. It depends on FAD as a cofactor.

It carries out the reaction a D-alpha-amino acid + A + H2O = a 2-oxocarboxylate + AH2 + NH4(+). Its pathway is amino-acid degradation; D-alanine degradation; NH(3) and pyruvate from D-alanine: step 1/1. Oxidative deamination of D-amino acids. This is D-amino acid dehydrogenase from Methylobacterium sp. (strain 4-46).